The sequence spans 510 residues: 2,3-bisphosphoglycerate-independent phosphoglycerate mutase (510 aa).

Mn(2+) contacts are provided by Asp14 and Ser64. Ser64 (phosphoserine intermediate) is an active-site residue. Residues His125, 155 to 156, Arg187, Arg193, 259 to 262, and Lys332 each bind substrate; these read RD and RADR. Mn(2+) contacts are provided by Asp399, His403, Asp440, His441, and His459.

It belongs to the BPG-independent phosphoglycerate mutase family. Monomer. Requires Mn(2+) as cofactor.

It carries out the reaction (2R)-2-phosphoglycerate = (2R)-3-phosphoglycerate. It participates in carbohydrate degradation; glycolysis; pyruvate from D-glyceraldehyde 3-phosphate: step 3/5. Functionally, catalyzes the interconversion of 2-phosphoglycerate and 3-phosphoglycerate. This is 2,3-bisphosphoglycerate-independent phosphoglycerate mutase from Ectopseudomonas mendocina (strain ymp) (Pseudomonas mendocina).